The sequence spans 766 residues: U3 small nucleolar RNA-associated protein 14 homolog C (766 aa).

The tract at residues histidine 14–histidine 42 is disordered. Serine 28, serine 51, serine 76, and serine 80 each carry phosphoserine. Lysine 121 participates in a covalent cross-link: Glycyl lysine isopeptide (Lys-Gly) (interchain with G-Cter in SUMO2). Threonine 204 is modified (phosphothreonine). 2 coiled-coil regions span residues leucine 216–lysine 245 and leucine 316–glutamate 346. The disordered stretch occupies residues methionine 365–leucine 563. Positions glutamate 396–serine 405 are enriched in low complexity. Phosphoserine occurs at positions 403 and 405. Residues alanine 407–leucine 434 are compositionally biased toward basic and acidic residues. Serine 443 is subject to Phosphoserine. Residue lysine 447 forms a Glycyl lysine isopeptide (Lys-Gly) (interchain with G-Cter in SUMO2) linkage. Serine 451 carries the post-translational modification Phosphoserine. Residues glutamine 452 to glutamine 470 adopt a coiled-coil conformation. Basic residues predominate over residues lysine 466–lysine 475. Positions arginine 502–proline 527 are enriched in basic and acidic residues. Lysine 517 participates in a covalent cross-link: Glycyl lysine isopeptide (Lys-Gly) (interchain with G-Cter in SUMO2). Polar residues predominate over residues glycine 533–asparagine 542. Residues aspartate 545–glutamine 555 are compositionally biased toward basic and acidic residues. Serine 567 is modified (phosphoserine). Lysine 732 is covalently cross-linked (Glycyl lysine isopeptide (Lys-Gly) (interchain with G-Cter in SUMO2)). The tract at residues glutamate 734–leucine 766 is disordered.

Belongs to the UTP14 family. Expressed in testis.

The protein resides in the nucleus. Its subcellular location is the nucleolus. In terms of biological role, essential for spermatogenesis. May be required specifically for ribosome biogenesis and hence protein synthesis during male meiosis. The polypeptide is U3 small nucleolar RNA-associated protein 14 homolog C (UTP14C) (Homo sapiens (Human)).